Here is a 368-residue protein sequence, read N- to C-terminus: Alcohol dehydrogenase 6 (368 aa).

Phosphoserine is present on serine 23. Zn(2+) contacts are provided by cysteine 47, histidine 69, cysteine 99, cysteine 102, cysteine 105, cysteine 113, and cysteine 175. Residues 200–205 (GLGGVG), aspartate 224, lysine 229, and 293–295 (VGV) each bind NAD(+).

This sequence belongs to the zinc-containing alcohol dehydrogenase family. Class-V subfamily. In terms of assembly, dimer. Zn(2+) is required as a cofactor. As to expression, stomach and liver.

It localises to the cytoplasm. The catalysed reaction is a primary alcohol + NAD(+) = an aldehyde + NADH + H(+). It carries out the reaction a secondary alcohol + NAD(+) = a ketone + NADH + H(+). With respect to regulation, inhibited partially by pyrazole (10 mM) in the reaction mixture containing 100 mM ethanol at pH 10.0. Its function is as follows. Alcohol dehydrogenase. Catalyzes the NAD-dependent oxidation of primary alcohols to the corresponding aldehydes. Oxidizes secondary alcohols to the corresponding ketones. This is Alcohol dehydrogenase 6 (ADH6) from Homo sapiens (Human).